Reading from the N-terminus, the 474-residue chain is Trigger factor (474 aa).

Residues 171–258 (GDVAVIDFQG…LKELKTRDLP (88 aa)) form the PPIase FKBP-type domain. Positions 441-474 (TEVDAASATVETTATETAEEAPEAPKAKKGKKKA) are disordered. Low complexity predominate over residues 444-456 (DAASATVETTATE).

Belongs to the FKBP-type PPIase family. Tig subfamily.

It localises to the cytoplasm. It carries out the reaction [protein]-peptidylproline (omega=180) = [protein]-peptidylproline (omega=0). Involved in protein export. Acts as a chaperone by maintaining the newly synthesized protein in an open conformation. Functions as a peptidyl-prolyl cis-trans isomerase. The protein is Trigger factor of Synechococcus sp. (strain ATCC 27144 / PCC 6301 / SAUG 1402/1) (Anacystis nidulans).